The sequence spans 320 residues: ATP-dependent 6-phosphofructokinase (320 aa).

G12 provides a ligand contact to ATP. ADP is bound by residues 22 to 26 (RGVVR) and 55 to 60 (RYSVSD). ATP-binding positions include 73–74 (RF) and 103–106 (GDGS). Position 104 (D104) interacts with Mg(2+). 126-128 (TID) serves as a coordination point for substrate. D128 (proton acceptor) is an active-site residue. Residue R155 participates in ADP binding. Substrate-binding positions include R163 and 170–172 (MGR). Residues 186-188 (GCE), K212, and 214-216 (KKH) contribute to the ADP site. Substrate is bound by residues E223, R244, and 250–253 (HIQR).

This sequence belongs to the phosphofructokinase type A (PFKA) family. ATP-dependent PFK group I subfamily. Prokaryotic clade 'B1' sub-subfamily. Homotetramer. Mg(2+) is required as a cofactor.

It is found in the cytoplasm. It catalyses the reaction beta-D-fructose 6-phosphate + ATP = beta-D-fructose 1,6-bisphosphate + ADP + H(+). It participates in carbohydrate degradation; glycolysis; D-glyceraldehyde 3-phosphate and glycerone phosphate from D-glucose: step 3/4. Allosterically activated by ADP and other diphosphonucleosides, and allosterically inhibited by phosphoenolpyruvate. In terms of biological role, catalyzes the phosphorylation of D-fructose 6-phosphate to fructose 1,6-bisphosphate by ATP, the first committing step of glycolysis. This is ATP-dependent 6-phosphofructokinase from Serratia proteamaculans (strain 568).